Here is a 104-residue protein sequence, read N- to C-terminus: Chemokine-like protein MC148 (104 aa).

Interacts with host CXCL12.

Functionally, plays a role in antagonizing the chemotaxis of multiple leukocyte subsets induced by CC and CXC chemokines. Displaces the interaction between CXCL12 and CXCR4 and thereby inactivates the antiviral activity of host CXCL12. This Homo sapiens (Human) protein is Chemokine-like protein MC148 (MC148).